The chain runs to 351 residues: Phospho-N-acetylmuramoyl-pentapeptide-transferase (351 aa).

Helical transmembrane passes span 17-37, 63-83, 85-105, 135-155, 158-178, 190-210, 230-250, 254-274, 279-299, and 328-348; these read TAYA…FIIL, IPTM…FFWI, LWNV…CLGF, ISVT…YFPF, SLKL…LISA, GLAI…AYLT, LVIF…FNAY, IMMG…TALI, ILFA…IIQV, and QVVI…LSTL.

This sequence belongs to the glycosyltransferase 4 family. MraY subfamily. It depends on Mg(2+) as a cofactor.

The protein localises to the cell inner membrane. The catalysed reaction is UDP-N-acetyl-alpha-D-muramoyl-L-alanyl-gamma-D-glutamyl-meso-2,6-diaminopimeloyl-D-alanyl-D-alanine + di-trans,octa-cis-undecaprenyl phosphate = di-trans,octa-cis-undecaprenyl diphospho-N-acetyl-alpha-D-muramoyl-L-alanyl-D-glutamyl-meso-2,6-diaminopimeloyl-D-alanyl-D-alanine + UMP. It participates in cell wall biogenesis; peptidoglycan biosynthesis. Catalyzes the initial step of the lipid cycle reactions in the biosynthesis of the cell wall peptidoglycan: transfers peptidoglycan precursor phospho-MurNAc-pentapeptide from UDP-MurNAc-pentapeptide onto the lipid carrier undecaprenyl phosphate, yielding undecaprenyl-pyrophosphoryl-MurNAc-pentapeptide, known as lipid I. The protein is Phospho-N-acetylmuramoyl-pentapeptide-transferase of Borrelia hermsii (strain HS1 / DAH).